A 634-amino-acid chain; its full sequence is Chaperone protein HtpG (634 aa).

The interval 1–344 is a; substrate-binding; it reads MSETVSHNKE…SNDLPLNVSR (344 aa). The tract at residues 345–561 is b; that stretch reads EILQDNKVTQ…DFEMGTQMAK (217 aa). The interval 562–634 is c; sequence LLEAAGQAVP…GAINKLLTKV (73 aa).

It belongs to the heat shock protein 90 family. Homodimer.

It localises to the cytoplasm. Molecular chaperone. Has ATPase activity. The sequence is that of Chaperone protein HtpG from Vibrio campbellii (strain ATCC BAA-1116).